We begin with the raw amino-acid sequence, 515 residues long: Maturase K (515 aa).

It belongs to the intron maturase 2 family. MatK subfamily.

The protein resides in the plastid. The protein localises to the chloroplast. In terms of biological role, usually encoded in the trnK tRNA gene intron. Probably assists in splicing its own and other chloroplast group II introns. In Sorghum bicolor (Sorghum), this protein is Maturase K.